The primary structure comprises 948 residues: UvrABC system protein A (948 aa).

42–49 (GLSGSGKS) lines the ATP pocket. The segment at 262–289 (CPVCSYSLPELEPRLFSFNNPMGSCPTC) adopts a C4-type zinc-finger fold. ABC transporter domains are found at residues 319 to 596 (WDKR…ENSV) and 616 to 945 (VNPG…KYLK). An ATP-binding site is contributed by 649 to 656 (GVSGSGKS). Residues 748 to 774 (CEACQGDGVIKVEMHFLPDVYVPCEVC) form a C4-type zinc finger.

Belongs to the ABC transporter superfamily. UvrA family. In terms of assembly, forms a heterotetramer with UvrB during the search for lesions.

Its subcellular location is the cytoplasm. The UvrABC repair system catalyzes the recognition and processing of DNA lesions. UvrA is an ATPase and a DNA-binding protein. A damage recognition complex composed of 2 UvrA and 2 UvrB subunits scans DNA for abnormalities. When the presence of a lesion has been verified by UvrB, the UvrA molecules dissociate. The protein is UvrABC system protein A of Neisseria meningitidis serogroup A / serotype 4A (strain DSM 15465 / Z2491).